The sequence spans 306 residues: MPFLELTLSCSEVTLPRFQNALDDVGALAVTMLDADADTSNERAILEPGVGEMPLWDRLTMTALFDGDSDALVVLAALEAFDPGLDWSQVAFRMVEDSDWERAWMDLFKPMQFGERTFIVPWNHALPEAADTPEAAVVRLDPGLAFGSGTHQTTALCLRWLDSLAGSGELQGRSVLDFGCGSGILAVAALKLGATHAVGVDNDPQALLATADNAQRNGVDAQLAVYMPQDEPVQTYQVVVANILASALDALADTLAARVAPGGRIALSGILHGQEDDLLKRYAPWFEQLRCERDEDWMRIDGVRRG.

S-adenosyl-L-methionine-binding residues include threonine 154, glycine 179, aspartate 201, and asparagine 242.

It belongs to the methyltransferase superfamily. PrmA family.

It localises to the cytoplasm. The catalysed reaction is L-lysyl-[protein] + 3 S-adenosyl-L-methionine = N(6),N(6),N(6)-trimethyl-L-lysyl-[protein] + 3 S-adenosyl-L-homocysteine + 3 H(+). In terms of biological role, methylates ribosomal protein L11. The protein is Ribosomal protein L11 methyltransferase of Xanthomonas axonopodis pv. citri (strain 306).